Reading from the N-terminus, the 350-residue chain is Flap endonuclease 1 (350 aa).

An N-domain region spans residues Met-1 to Lys-101. Asp-30, Asp-83, Glu-155, Glu-157, Asp-176, Asp-178, and Asp-239 together coordinate Mg(2+). The tract at residues Ala-119–Arg-261 is I-domain. Positions Gln-340–Leu-348 are interaction with PCNA.

Belongs to the XPG/RAD2 endonuclease family. FEN1 subfamily. As to quaternary structure, interacts with PCNA. PCNA stimulates the nuclease activity without altering cleavage specificity. The cofactor is Mg(2+).

Structure-specific nuclease with 5'-flap endonuclease and 5'-3' exonuclease activities involved in DNA replication and repair. During DNA replication, cleaves the 5'-overhanging flap structure that is generated by displacement synthesis when DNA polymerase encounters the 5'-end of a downstream Okazaki fragment. Binds the unpaired 3'-DNA end and kinks the DNA to facilitate 5' cleavage specificity. Cleaves one nucleotide into the double-stranded DNA from the junction in flap DNA, leaving a nick for ligation. Also involved in the base excision repair (BER) pathway. Acts as a genome stabilization factor that prevents flaps from equilibrating into structures that lead to duplications and deletions. Also possesses 5'-3' exonuclease activity on nicked or gapped double-stranded DNA. In Hyperthermus butylicus (strain DSM 5456 / JCM 9403 / PLM1-5), this protein is Flap endonuclease 1.